Consider the following 554-residue polypeptide: Glutamine--tRNA ligase (554 aa).

Positions 34–44 (PEPNGYLHIGH) match the 'HIGH' region motif. ATP contacts are provided by residues 35 to 37 (EPN) and 41 to 47 (HIGHAKS). L-glutamine contacts are provided by Asp67 and Tyr212. ATP is bound by residues Thr231, 261–262 (RL), and 269–271 (MSK). The 'KMSKS' region motif lies at 268–272 (VMSKR). Residues 317–324 (TKQDNTIE) are interaction with tRNA.

It belongs to the class-I aminoacyl-tRNA synthetase family. As to quaternary structure, monomer.

Its subcellular location is the cytoplasm. It carries out the reaction tRNA(Gln) + L-glutamine + ATP = L-glutaminyl-tRNA(Gln) + AMP + diphosphate. The chain is Glutamine--tRNA ligase from Escherichia coli O17:K52:H18 (strain UMN026 / ExPEC).